A 287-amino-acid chain; its full sequence is Ret finger protein-like 4A-like protein 1 (287 aa).

The RING-type; degenerate zinc-finger motif lies at 11–53 (CPVCLKDLEEAVQLKCGYACCLQCLNSLQKEPDGEGLLCRFCS). Residues 78–276 (EPKLKSVLTM…LSICSVINPS (199 aa)) enclose the B30.2/SPRY domain.

The sequence is that of Ret finger protein-like 4A-like protein 1 (RFPL4AL1) from Homo sapiens (Human).